The sequence spans 197 residues: Rac-like GTP-binding protein RAC1 (197 aa).

Residue 13–20 (GDGAVGKT) coordinates GTP. The Effector region motif lies at 35–43 (YVPTVFDNF). GTP contacts are provided by residues 60–64 (DTAGQ) and 118–121 (TKLD). Cys-194 is subject to Cysteine methyl ester. The S-geranylgeranyl cysteine moiety is linked to residue Cys-194. Residues 195–197 (SIL) constitute a propeptide, removed in mature form.

The protein belongs to the small GTPase superfamily. Rho family.

It localises to the cytoplasm. Its subcellular location is the membrane. Inactive GDP-bound Rho GTPases reside in the cytosol, are found in a complex with Rho GDP-dissociation inhibitors (Rho GDIs), and are released from the GDI protein in order to translocate to membranes upon activation. The protein is Rac-like GTP-binding protein RAC1 (RAC1) of Lotus japonicus (Lotus corniculatus var. japonicus).